Here is a 256-residue protein sequence, read N- to C-terminus: Probable sulfite/organosulfonate exporter TauE (256 aa).

8 helical membrane-spanning segments follow: residues 5–25, 33–53, 76–96, 103–123, 142–162, 172–190, 199–219, and 236–256; these read LLLP…FQTV, IVMG…AAVV, AVAA…LVLE, ATLL…SAAL, VFGG…IFQF, IRCA…RTLF, AAVC…TLLG, and FGVL…AWVL.

Belongs to the 4-toluene sulfonate uptake permease (TSUP) (TC 2.A.102) family.

It localises to the cell inner membrane. In terms of biological role, could be a sulfite/organosulfonate exporter with a wide substrate range, including 3-sulfolactate and 3-sulfopyruvate. The polypeptide is Probable sulfite/organosulfonate exporter TauE (Cupriavidus necator (strain ATCC 17699 / DSM 428 / KCTC 22496 / NCIMB 10442 / H16 / Stanier 337) (Ralstonia eutropha)).